Here is a 483-residue protein sequence, read N- to C-terminus: Probable cytosol aminopeptidase (483 aa).

Mn(2+) is bound by residues K245 and D250. K257 is a catalytic residue. D268, D327, and E329 together coordinate Mn(2+). Residue R331 is part of the active site.

The protein belongs to the peptidase M17 family. Mn(2+) serves as cofactor.

The protein localises to the cytoplasm. The catalysed reaction is Release of an N-terminal amino acid, Xaa-|-Yaa-, in which Xaa is preferably Leu, but may be other amino acids including Pro although not Arg or Lys, and Yaa may be Pro. Amino acid amides and methyl esters are also readily hydrolyzed, but rates on arylamides are exceedingly low.. It carries out the reaction Release of an N-terminal amino acid, preferentially leucine, but not glutamic or aspartic acids.. Its function is as follows. Presumably involved in the processing and regular turnover of intracellular proteins. Catalyzes the removal of unsubstituted N-terminal amino acids from various peptides. The polypeptide is Probable cytosol aminopeptidase (Wolinella succinogenes (strain ATCC 29543 / DSM 1740 / CCUG 13145 / JCM 31913 / LMG 7466 / NCTC 11488 / FDC 602W) (Vibrio succinogenes)).